The chain runs to 164 residues: Putative HTH-type transcriptional regulator ORF2 (164 aa).

Residues 2–131 (RLTTKGRYAV…SGISLADLVA (130 aa)) form the HTH rrf2-type domain.

This is Putative HTH-type transcriptional regulator ORF2 from Azotobacter vinelandii.